Consider the following 515-residue polypeptide: GMP synthase [glutamine-hydrolyzing] (515 aa).

In terms of domain architecture, Glutamine amidotransferase type-1 spans 6-198 (KVIIIDYGSQ…LFHVAKLKAD (193 aa)). Residue Cys83 is the Nucleophile of the active site. Active-site residues include His172 and Glu174. Positions 199 to 390 (WTMSSFVERA…LGLPDFIIWR (192 aa)) constitute a GMPS ATP-PPase domain. 226–232 (SGGIDST) lines the ATP pocket.

Homodimer.

It carries out the reaction XMP + L-glutamine + ATP + H2O = GMP + L-glutamate + AMP + diphosphate + 2 H(+). Its pathway is purine metabolism; GMP biosynthesis; GMP from XMP (L-Gln route): step 1/1. Catalyzes the synthesis of GMP from XMP. In Nitratidesulfovibrio vulgaris (strain DP4) (Desulfovibrio vulgaris), this protein is GMP synthase [glutamine-hydrolyzing].